The sequence spans 456 residues: Glutathione reductase (456 aa).

Positions 14, 15, 34, 41, 42, and 50 each coordinate FAD. Position 14 (S14) interacts with glutathione. A disulfide bond links C42 and C47. Y99 contributes to the glutathione binding site. Position 115 (G115) interacts with FAD. Residues A180, I183, E186, R203, R209, and G267 each coordinate NADP(+). D308 serves as a coordination point for FAD. Position 315 (E315) interacts with NADP(+). T317 is an FAD binding site. R325 provides a ligand contact to glutathione. Residue V348 coordinates NADP(+). Residue H445 participates in FAD binding. H445 (proton acceptor) is an active-site residue.

This sequence belongs to the class-I pyridine nucleotide-disulfide oxidoreductase family. As to quaternary structure, homodimer. FAD serves as cofactor.

It localises to the cytoplasm. It catalyses the reaction 2 glutathione + NADP(+) = glutathione disulfide + NADPH + H(+). Its function is as follows. Catalyzes the reduction of glutathione disulfide (GSSG) to reduced glutathione (GSH). Constitutes the major mechanism to maintain a high GSH:GSSG ratio in the cytosol. The sequence is that of Glutathione reductase (gor) from Haemophilus influenzae (strain ATCC 51907 / DSM 11121 / KW20 / Rd).